Consider the following 357-residue polypeptide: Arginine kinase Met e 2 (357 aa).

A Phosphagen kinase N-terminal domain is found at 9-91 (KLEAGFKKLE…FDPIIEDYHV (83 aa)). 64–68 (GVGIY) contributes to the L-arginine binding site. A Phosphagen kinase C-terminal domain is found at 119–356 (FVISTRVRCG…LELIKIEKEM (238 aa)). Residues 122-126 (STRVR) and H185 contribute to the ATP site. E225 serves as a coordination point for L-arginine. R229 is a binding site for ATP. C271 lines the L-arginine pocket. Residues 280 to 284 (RASVH) and 309 to 314 (RGTRGE) each bind ATP. Residue E314 participates in L-arginine binding.

This sequence belongs to the ATP:guanido phosphotransferase family.

It carries out the reaction L-arginine + ATP = N(omega)-phospho-L-arginine + ADP + H(+). Functionally, catalyzes the reversible transfer of high energy ATP gamma-phosphate group to L-arginine. This chain is Arginine kinase Met e 2, found in Metapenaeus ensis (Greasyback shrimp).